A 121-amino-acid chain; its full sequence is MRSLLVLLALAACASAQYFFRGGDDDNGFFGGDDDNGYFGYFPRFSYPIYRPIYRPIYYPQIIRPFYGYGYGGFNGGYGGLGLYGGYGGFGGYGYRPFSYGYNPFSYGYYGFGDDDGGFDD.

The signal sequence occupies residues 1-16 (MRSLLVLLALAACASA). Q17 is subject to Pyrrolidone carboxylic acid. A run of 4 repeats spans residues 48–51 (PIYR), 52–55 (PIYR), 56–59 (PIYY), and 60–63 (PQII). Positions 48–63 (PIYRPIYRPIYYPQII) are 4 X 4 AA approximate tandem repeats of P-I-Y-R.

Expressed only at the mantle edge where it is found predominantly in the inner side of the outer mantle fold.

Functionally, displays inhibitory activity against calcium carbonate precipitation, binds calcium and affects crystallization of calcium carbonate in vitro. May be involved in calcification of the prismatic layer of the shell. This is Prismalin-14 from Pinctada fucata (Akoya pearl oyster).